We begin with the raw amino-acid sequence, 585 residues long: Frizzled-10 (585 aa).

An N-terminal signal peptide occupies residues 1-24 (MGPAAGNLVRAVLALCWLAEHCAG). The Extracellular segment spans residues 25-229 (ISSIDIERPG…DVYWSKDDKQ (205 aa)). Residues 33 to 154 (PGDGRCQPIE…NDPNYLCMEA (122 aa)) enclose the FZ domain. 5 cysteine pairs are disulfide-bonded: Cys-38/Cys-99, Cys-46/Cys-92, Cys-83/Cys-121, Cys-110/Cys-151, and Cys-114/Cys-138. N-linked (GlcNAc...) asparagine glycosylation occurs at Asn-52. The interval 155–195 (PNNGSDEPPRGSSMLPPMFRPQRPSTGHDLQQHKDSLSRTS) is disordered. Asn-157 carries an N-linked (GlcNAc...) asparagine glycan. Residues 230-250 (FAVIWIAIWSILCFFSSAFTV) form a helical membrane-spanning segment. The Cytoplasmic portion of the chain corresponds to 251 to 265 (LTFLIDPQRFKYPER). Residues 266-286 (PIIFLSMCYCVYSVGYIIRLF) form a helical membrane-spanning segment. Residues 287-314 (SGAESIACDRDSGQLYVIQEGLESTGCT) are Extracellular-facing. Residues 315–335 (IVFLVLYYFGMASSLWWVILT) form a helical membrane-spanning segment. At 336–355 (LTWFLAAGKKWGHEAIEANS) the chain is on the cytoplasmic side. Residues 356-376 (SYFHLAAWAIPAVKTIMILVM) traverse the membrane as a helical segment. The Extracellular segment spans residues 377–397 (RRVAGDELTGLCYVGSMDVNA). Residues 398–418 (LTGFVLIPLACYLIIGTSFIL) traverse the membrane as a helical segment. Residues 419-447 (SGFVALFHIRRVMKTGGENTDKLEKLMVR) are Cytoplasmic-facing. Residues 448–468 (IGVFSVLYTVPATCVIACYFY) form a helical membrane-spanning segment. Residues 469–506 (ERLNMDYWKIVASQQKCKMNNQTKNLDCMMNNSIPAVE) lie on the Extracellular side of the membrane. Asn-489 and Asn-499 each carry an N-linked (GlcNAc...) asparagine glycan. The chain crosses the membrane as a helical span at residues 507 to 527 (IFMVKIFMLLVVGITSGMWIW). Residues 528–585 (TSKTLQSWQNVCSRRLKKRSRRKPASVITSSGIYKKPQHPQKTHLAKYESTLQPPTCV) are Cytoplasmic-facing. The Lys-Thr-X-X-X-Trp motif, mediates interaction with the PDZ domain of Dvl family members signature appears at 530–535 (KTLQSW). A PDZ-binding motif is present at residues 583 to 585 (TCV).

Belongs to the G-protein coupled receptor Fz/Smo family. Interacts with WNT7A. As to expression, expressed in the dorsal ectoderm overlying the developing spinal cord.

The protein resides in the cell membrane. Its function is as follows. Receptor for Wnt proteins. Functions in the canonical Wnt/beta-catenin signaling pathway. Activation by WNT7A induces expression of beta-catenin target genes. The canonical Wnt/beta-catenin signaling pathway leads to the activation of disheveled proteins, inhibition of GSK-3 kinase, nuclear accumulation of beta-catenin and activation of Wnt target genes. A second signaling pathway involving PKC and calcium fluxes has been seen for some family members, but it is not yet clear if it represents a distinct pathway or if it can be integrated in the canonical pathway, as PKC seems to be required for Wnt-mediated inactivation of GSK-3 kinase. Both pathways seem to involve interactions with G-proteins. May be involved in transduction and intercellular transmission of polarity information during tissue morphogenesis and/or in differentiated tissues. This is Frizzled-10 (FZD10) from Gallus gallus (Chicken).